A 620-amino-acid polypeptide reads, in one-letter code: Estrogen receptor (620 aa).

2 stretches are compositionally biased toward polar residues: residues 1–10 (MSKRQSSVQI) and 101–111 (GSLQSLGSGPT). 2 disordered regions span residues 1-55 (MSKR…RGSG) and 88-111 (YSAP…SGPT). The interval 1–185 (MSKRQSSVQI…GFEMAKDTRF (185 aa)) is modulating. NR C4-type zinc fingers lie at residues 186–206 (CAVC…CEGC) and 222–246 (CPAT…LRKC). The nuclear receptor DNA-binding region spans 186–251 (CAVCSDYASG…RLRKCYEVGM (66 aa)). The tract at residues 252-314 (MKGGVRKDRI…GGGRLSVTSI (63 aa)) is hinge. The interval 286 to 308 (KTVHYDGRKRSSTGGGGGGGGGR) is disordered. Positions 298 to 308 (TGGGGGGGGGR) are enriched in gly residues. In terms of domain architecture, NR LBD spans 315 to 551 (PPEQVLLLLQ…DLLLEMLDAH (237 aa)). The disordered stretch occupies residues 558–620 (RAPQSLSQVD…RPDCTPALQD (63 aa)).

Belongs to the nuclear hormone receptor family. NR3 subfamily. As to quaternary structure, binds DNA as a homodimer. Can form a heterodimer with ER-beta. Widely expressed in brain, ovary, testis, and female liver.

It is found in the nucleus. Its function is as follows. The steroid hormones and their receptors are involved in the regulation of eukaryotic gene expression and affect cellular proliferation and differentiation in target tissues. This Oryzias latipes (Japanese rice fish) protein is Estrogen receptor (esr1).